An 88-amino-acid polypeptide reads, in one-letter code: Homeobox protein knotted-1-like 1 (88 aa).

The 21-residue stretch at 4–24 (ELKLELKQGFKSRIEDVREEI) folds into the ELK domain. Positions 25–88 (LRKRRAGKLP…NQRKRNWHNN (64 aa)) form a DNA-binding region, homeobox; TALE-type.

Belongs to the TALE/KNOX homeobox family. Highly expressed in the roots.

The protein localises to the nucleus. This is Homeobox protein knotted-1-like 1 (KNOX1) from Zea mays (Maize).